A 363-amino-acid chain; its full sequence is UDP-N-acetylglucosamine--N-acetylmuramyl-(pentapeptide) pyrophosphoryl-undecaprenol N-acetylglucosamine transferase (363 aa).

Residues 13–15, N125, R166, S195, I249, 268–273, and Q294 contribute to the UDP-N-acetyl-alpha-D-glucosamine site; these read TGG and ALTVSE.

It belongs to the glycosyltransferase 28 family. MurG subfamily.

The protein resides in the cell inner membrane. The catalysed reaction is di-trans,octa-cis-undecaprenyl diphospho-N-acetyl-alpha-D-muramoyl-L-alanyl-D-glutamyl-meso-2,6-diaminopimeloyl-D-alanyl-D-alanine + UDP-N-acetyl-alpha-D-glucosamine = di-trans,octa-cis-undecaprenyl diphospho-[N-acetyl-alpha-D-glucosaminyl-(1-&gt;4)]-N-acetyl-alpha-D-muramoyl-L-alanyl-D-glutamyl-meso-2,6-diaminopimeloyl-D-alanyl-D-alanine + UDP + H(+). It functions in the pathway cell wall biogenesis; peptidoglycan biosynthesis. Cell wall formation. Catalyzes the transfer of a GlcNAc subunit on undecaprenyl-pyrophosphoryl-MurNAc-pentapeptide (lipid intermediate I) to form undecaprenyl-pyrophosphoryl-MurNAc-(pentapeptide)GlcNAc (lipid intermediate II). This Cellvibrio japonicus (strain Ueda107) (Pseudomonas fluorescens subsp. cellulosa) protein is UDP-N-acetylglucosamine--N-acetylmuramyl-(pentapeptide) pyrophosphoryl-undecaprenol N-acetylglucosamine transferase.